The primary structure comprises 621 residues: tRNA uridine 5-carboxymethylaminomethyl modification enzyme MnmG (621 aa).

An FAD-binding site is contributed by 8 to 13 (GAGHAG). Residues 199-227 (PRIDRRSVDYSRVEEQKGDENPPPFSFST) are disordered. The segment covering 200-218 (RIDRRSVDYSRVEEQKGDE) has biased composition (basic and acidic residues). NAD(+) is bound at residue 269-283 (GPRYCPSIEDKIFRF).

It belongs to the MnmG family. Homodimer. Heterotetramer of two MnmE and two MnmG subunits. FAD serves as cofactor.

It is found in the cytoplasm. NAD-binding protein involved in the addition of a carboxymethylaminomethyl (cmnm) group at the wobble position (U34) of certain tRNAs, forming tRNA-cmnm(5)s(2)U34. This Chlorobium luteolum (strain DSM 273 / BCRC 81028 / 2530) (Pelodictyon luteolum) protein is tRNA uridine 5-carboxymethylaminomethyl modification enzyme MnmG.